A 54-amino-acid chain; its full sequence is uncharacterized protein (54 aa).

The segment at 1-38 is disordered; the sequence is MFPNSNGPNKMKALVAPSNSSTTSKTNNNNLPPNGRSS. The segment covering 17–38 has biased composition (low complexity); sequence PSNSSTTSKTNNNNLPPNGRSS.

This is an uncharacterized protein from Dictyostelium discoideum (Social amoeba).